The chain runs to 107 residues: ATP-dependent Clp protease adapter protein ClpS (107 aa).

Belongs to the ClpS family. As to quaternary structure, binds to the N-terminal domain of the chaperone ClpA.

Functionally, involved in the modulation of the specificity of the ClpAP-mediated ATP-dependent protein degradation. The polypeptide is ATP-dependent Clp protease adapter protein ClpS (Syntrophus aciditrophicus (strain SB)).